The following is a 518-amino-acid chain: Tyrosine/DOPA decarboxylase 1 (518 aa).

Position 321 is an N6-(pyridoxal phosphate)lysine (lysine 321).

The protein belongs to the group II decarboxylase family. Homodimer. Pyridoxal 5'-phosphate serves as cofactor. In terms of tissue distribution, predominantly expressed in the roots.

It carries out the reaction L-tyrosine + H(+) = tyramine + CO2. It catalyses the reaction L-dopa + H(+) = dopamine + CO2. The catalysed reaction is 5-hydroxy-L-tryptophan + H(+) = serotonin + CO2. In terms of biological role, marginally higher substrate specificity for L-DOPA over L-tyrosine. This is Tyrosine/DOPA decarboxylase 1 (TYDC1) from Papaver somniferum (Opium poppy).